The chain runs to 511 residues: Cytochrome P450 monooxygenase cypX (511 aa).

Residues 18–38 traverse the membrane as a helical segment; sequence LPFSLALVAAAFVLYNIVSII. 2 N-linked (GlcNAc...) asparagine glycosylation sites follow: Asn162 and Asn407. Heme is bound at residue Cys454.

The protein belongs to the cytochrome P450 family. Heme serves as cofactor.

The protein resides in the membrane. Its pathway is mycotoxin biosynthesis. Cytochrome P450 monooxygenase; part of the fragmented gene cluster that mediates the biosynthesis of dothistromin (DOTH), a polyketide toxin very similar in structure to the aflatoxin precursor, versicolorin B. The first step of the pathway is the conversion of acetate to norsolorinic acid (NOR) and requires the fatty acid synthase subunits hexA and hexB, as well as the polyketide synthase pksA. PksA combines a hexanoyl starter unit and 7 malonyl-CoA extender units to synthesize the precursor NOR. The hexanoyl starter unit is provided to the acyl-carrier protein (ACP) domain by the fungal fatty acid synthase hexA/hexB. The second step is the conversion of NOR to averantin (AVN) and requires the norsolorinic acid ketoreductase nor1, which catalyzes the dehydration of norsolorinic acid to form (1'S)-averantin. The cytochrome P450 monooxygenase avnA then catalyzes the hydroxylation of AVN to 5'hydroxyaverantin (HAVN). The next step is performed by adhA that transforms HAVN to averufin (AVF). Averufin might then be converted to hydroxyversicolorone by cypX and avfA. Hydroxyversicolorone is further converted versiconal hemiacetal acetate (VHA) by moxY. VHA is then the substrate for the versiconal hemiacetal acetate esterase est1 to yield versiconal (VAL). Versicolorin B synthase vbsA then converts VAL to versicolorin B (VERB) by closing the bisfuran ring. Then, the activity of the versicolorin B desaturase verB leads to versicolorin A (VERA). DotB, a predicted chloroperoxidase, may perform epoxidation of the A-ring of VERA. Alternatively, a cytochrome P450, such as cypX or avnA could catalyze this step. It is also possible that another, uncharacterized, cytochrome P450 enzyme is responsible for this step. Opening of the epoxide could potentially be achieved by the epoxide hydrolase epoA. However, epoA seems not to be required for DOTH biosynthesis, but other epoxide hydrolases may have the ability to complement this hydrolysis. Alternatively, opening of the epoxide ring could be achieved non-enzymatically. The next step is the deoxygenation of ring A to yield the 5,8-dihydroxyanthraquinone which is most likely catalyzed by the NADPH dehydrogenase encoded by ver1. The last stages of DOTH biosynthesis are proposed to involve hydroxylation of the bisfuran. OrdB and norB might have oxidative roles here. An alternative possibility is that cytochrome P450 monoogenases such as avnA and cypX might perform these steps in addition to previously proposed steps. The chain is Cytochrome P450 monooxygenase cypX from Dothistroma septosporum (Red band needle blight fungus).